The following is a 225-amino-acid chain: UPF0758 protein Ping_0056 (225 aa).

The MPN domain occupies 103–225; that stretch reads ALTSAAQTKA…CTSFAENGWI (123 aa). Histidine 174, histidine 176, and aspartate 187 together coordinate Zn(2+). Residues 174–187 carry the JAMM motif motif; the sequence is HNHPSGDPSASEAD.

This sequence belongs to the UPF0758 family.

The chain is UPF0758 protein Ping_0056 from Psychromonas ingrahamii (strain DSM 17664 / CCUG 51855 / 37).